The following is a 518-amino-acid chain: UDP-N-acetylmuramate--L-alanine ligase (518 aa).

ATP is bound at residue 158–164; it reads GTHGKTT.

This sequence belongs to the MurCDEF family.

The protein resides in the cytoplasm. It carries out the reaction UDP-N-acetyl-alpha-D-muramate + L-alanine + ATP = UDP-N-acetyl-alpha-D-muramoyl-L-alanine + ADP + phosphate + H(+). Its pathway is cell wall biogenesis; peptidoglycan biosynthesis. Its function is as follows. Cell wall formation. This is UDP-N-acetylmuramate--L-alanine ligase from Crocosphaera subtropica (strain ATCC 51142 / BH68) (Cyanothece sp. (strain ATCC 51142)).